The sequence spans 76 residues: MIYKVFYQETKDSSPRREQTKTLYLDIDAQTELDGRIQARQLVEEKIAYNIELIELLSDKHLEYEKETGAFQLTEF.

It belongs to the RNA polymerase subunit epsilon family. In terms of assembly, RNAP is composed of a core of 2 alpha, a beta and a beta' subunit. The core is associated with a delta subunit, and at least one of epsilon or omega. When a sigma factor is associated with the core the holoenzyme is formed, which can initiate transcription.

It catalyses the reaction RNA(n) + a ribonucleoside 5'-triphosphate = RNA(n+1) + diphosphate. In terms of biological role, a non-essential component of RNA polymerase (RNAP). The polypeptide is DNA-directed RNA polymerase subunit epsilon (Streptococcus mutans serotype c (strain ATCC 700610 / UA159)).